The following is an 855-amino-acid chain: DNA mismatch repair protein MutS (855 aa).

616-623 contributes to the ATP binding site; the sequence is GPNMGGKS.

Belongs to the DNA mismatch repair MutS family.

Its function is as follows. This protein is involved in the repair of mismatches in DNA. It is possible that it carries out the mismatch recognition step. This protein has a weak ATPase activity. The protein is DNA mismatch repair protein MutS of Salmonella schwarzengrund (strain CVM19633).